The following is a 90-amino-acid chain: Translation initiation factor IF-1 (90 aa).

In terms of domain architecture, S1-like spans 7 to 76 (KEDVIRMEGT…TRGRIVYRKK (70 aa)).

Belongs to the IF-1 family. Component of the 30S ribosomal translation pre-initiation complex which assembles on the 30S ribosome in the order IF-2 and IF-3, IF-1 and N-formylmethionyl-tRNA(fMet); mRNA recruitment can occur at any time during PIC assembly.

Its subcellular location is the cytoplasm. In terms of biological role, one of the essential components for the initiation of protein synthesis. Stabilizes the binding of IF-2 and IF-3 on the 30S subunit to which N-formylmethionyl-tRNA(fMet) subsequently binds. Helps modulate mRNA selection, yielding the 30S pre-initiation complex (PIC). Upon addition of the 50S ribosomal subunit IF-1, IF-2 and IF-3 are released leaving the mature 70S translation initiation complex. The polypeptide is Translation initiation factor IF-1 (Fervidobacterium nodosum (strain ATCC 35602 / DSM 5306 / Rt17-B1)).